The primary structure comprises 263 residues: Small ribosomal subunit protein eS4 (263 aa).

Positions 42–104 constitute an S4 RNA-binding domain; it reads LPLIIFLRNR…TGENFRLIYD (63 aa).

This sequence belongs to the eukaryotic ribosomal protein eS4 family.

In Bos taurus (Bovine), this protein is Small ribosomal subunit protein eS4 (RPS4).